The sequence spans 463 residues: ATP synthase subunit beta (463 aa).

Position 151-158 (151-158 (GGAGVGKT)) interacts with ATP.

Belongs to the ATPase alpha/beta chains family. F-type ATPases have 2 components, CF(1) - the catalytic core - and CF(0) - the membrane proton channel. CF(1) has five subunits: alpha(3), beta(3), gamma(1), delta(1), epsilon(1). CF(0) has three main subunits: a(1), b(2) and c(9-12). The alpha and beta chains form an alternating ring which encloses part of the gamma chain. CF(1) is attached to CF(0) by a central stalk formed by the gamma and epsilon chains, while a peripheral stalk is formed by the delta and b chains.

The protein resides in the cell membrane. The enzyme catalyses ATP + H2O + 4 H(+)(in) = ADP + phosphate + 5 H(+)(out). Functionally, produces ATP from ADP in the presence of a proton gradient across the membrane. The catalytic sites are hosted primarily by the beta subunits. In Clostridium botulinum (strain Okra / Type B1), this protein is ATP synthase subunit beta.